The sequence spans 232 residues: Thiamine import ATP-binding protein ThiQ (232 aa).

One can recognise an ABC transporter domain in the interval 2 to 230; the sequence is LKLTDITWLY…KGSASAIWGI (229 aa). 32-39 is an ATP binding site; it reads GPSGAGKS.

It belongs to the ABC transporter superfamily. Thiamine importer (TC 3.A.1.19.1) family. In terms of assembly, the complex is composed of two ATP-binding proteins (ThiQ), two transmembrane proteins (ThiP) and a solute-binding protein (ThiB).

The protein localises to the cell inner membrane. It catalyses the reaction thiamine(out) + ATP + H2O = thiamine(in) + ADP + phosphate + H(+). Its function is as follows. Part of the ABC transporter complex ThiBPQ involved in thiamine import. Responsible for energy coupling to the transport system. The polypeptide is Thiamine import ATP-binding protein ThiQ (Shigella flexneri).